The primary structure comprises 193 residues: Protein PrsJ (193 aa).

An N-terminal signal peptide occupies residues 1–27 (MVVNKTTAVLYLIALSLSGFIHTFLRA).

It localises to the periplasm. Its function is as follows. This protein maintains pilus integrity and thus is an important participant in pilus assembly. It may function as molecular chaperone directly or indirectly in the correct assembly of PapA subunits. In Escherichia coli, this protein is Protein PrsJ (prsJ).